Reading from the N-terminus, the 105-residue chain is MAPKVQQTKAAKAAAALAGGKKGKKKWNKGKVKDKAQHIVILDQEKYDRILKDVPTYKYVSVSVLVDRLKIGGSLARVALRQLEEDGIITPVLKHSKQAIYTRAQ.

The protein belongs to the eukaryotic ribosomal protein eS25 family. As to quaternary structure, component of the small ribosomal subunit. Mature ribosomes consist of a small (40S) and a large (60S) subunit. The 40S subunit contains about 32 different proteins and 1 molecule of RNA (18S). The 60S subunit contains 45 different proteins and 3 molecules of RNA (25S, 5.8S and 5S).

Its subcellular location is the cytoplasm. Component of the ribosome, a large ribonucleoprotein complex responsible for the synthesis of proteins in the cell. The small ribosomal subunit (SSU) binds messenger RNAs (mRNAs) and translates the encoded message by selecting cognate aminoacyl-transfer RNA (tRNA) molecules. The large subunit (LSU) contains the ribosomal catalytic site termed the peptidyl transferase center (PTC), which catalyzes the formation of peptide bonds, thereby polymerizing the amino acids delivered by tRNAs into a polypeptide chain. The nascent polypeptides leave the ribosome through a tunnel in the LSU and interact with protein factors that function in enzymatic processing, targeting, and the membrane insertion of nascent chains at the exit of the ribosomal tunnel. This Candida albicans (strain SC5314 / ATCC MYA-2876) (Yeast) protein is Small ribosomal subunit protein eS25 (RPS25B).